A 474-amino-acid polypeptide reads, in one-letter code: Ribulose bisphosphate carboxylase large chain (474 aa).

At K13 the chain carries N6,N6,N6-trimethyllysine. The substrate site is built by N122 and T172. The active-site Proton acceptor is K174. K176 contributes to the substrate binding site. K200, D202, and E203 together coordinate Mg(2+). K200 is modified (N6-carboxylysine). The active-site Proton acceptor is H293. Positions 294, 326, and 378 each coordinate substrate.

It belongs to the RuBisCO large chain family. Type I subfamily. In terms of assembly, heterohexadecamer of 8 large chains and 8 small chains; disulfide-linked. The disulfide link is formed within the large subunit homodimers. It depends on Mg(2+) as a cofactor. In terms of processing, the disulfide bond which can form in the large chain dimeric partners within the hexadecamer appears to be associated with oxidative stress and protein turnover.

The protein resides in the plastid. The protein localises to the chloroplast. The enzyme catalyses 2 (2R)-3-phosphoglycerate + 2 H(+) = D-ribulose 1,5-bisphosphate + CO2 + H2O. It catalyses the reaction D-ribulose 1,5-bisphosphate + O2 = 2-phosphoglycolate + (2R)-3-phosphoglycerate + 2 H(+). Its function is as follows. RuBisCO catalyzes two reactions: the carboxylation of D-ribulose 1,5-bisphosphate, the primary event in carbon dioxide fixation, as well as the oxidative fragmentation of the pentose substrate in the photorespiration process. Both reactions occur simultaneously and in competition at the same active site. This Dendrophthora clavata (Columbian mistletoe) protein is Ribulose bisphosphate carboxylase large chain.